A 337-amino-acid polypeptide reads, in one-letter code: Phenylalanine--tRNA ligase alpha subunit (337 aa).

E258 contacts Mg(2+).

Belongs to the class-II aminoacyl-tRNA synthetase family. Phe-tRNA synthetase alpha subunit type 1 subfamily. Tetramer of two alpha and two beta subunits. Mg(2+) is required as a cofactor.

It is found in the cytoplasm. It carries out the reaction tRNA(Phe) + L-phenylalanine + ATP = L-phenylalanyl-tRNA(Phe) + AMP + diphosphate + H(+). The protein is Phenylalanine--tRNA ligase alpha subunit of Burkholderia vietnamiensis (strain G4 / LMG 22486) (Burkholderia cepacia (strain R1808)).